A 421-amino-acid chain; its full sequence is Periplasmic [Fe] hydrogenase large subunit (421 aa).

4Fe-4S ferredoxin-type domains follow at residues 26-57 (HFVQ…MGEP) and 59-86 (SIPH…EAQS). Cysteine 35, cysteine 38, cysteine 41, cysteine 45, cysteine 66, cysteine 69, cysteine 72, cysteine 76, cysteine 179, cysteine 234, cysteine 378, and cysteine 382 together coordinate [4Fe-4S] cluster. Residue cysteine 382 participates in Fe(2+) binding.

In terms of assembly, heterodimer of a large and a small subunit. [4Fe-4S] cluster serves as cofactor. The cofactor is Fe(2+).

It localises to the periplasm. The catalysed reaction is H2 + 2 oxidized [2Fe-2S]-[ferredoxin] = 2 reduced [2Fe-2S]-[ferredoxin] + 2 H(+). Its function is as follows. May be involved in hydrogen uptake for the reduction of sulfate to hydrogen sulfide in an electron transport chain. Cytochrome c3 is likely to be the physiological electron carrier for the enzyme. The sequence is that of Periplasmic [Fe] hydrogenase large subunit (hydA) from Nitratidesulfovibrio vulgaris (strain ATCC 29579 / DSM 644 / CCUG 34227 / NCIMB 8303 / VKM B-1760 / Hildenborough) (Desulfovibrio vulgaris).